Here is a 377-residue protein sequence, read N- to C-terminus: Delta(12) fatty acid desaturase DES8.11 (377 aa).

2 consecutive transmembrane segments (helical) span residues 55 to 75 (LIVA…IPTP) and 79 to 99 (LAWP…WVIG). A Histidine box-1 motif is present at residues 100-104 (HECGH). A helical membrane pass occupies residues 112 to 132 (LIDDIVGFVLHSALLTPYFSW). A Histidine box-2 motif is present at residues 136–140 (HRNHH). 3 helical membrane passes run 174-194 (VFTL…TNIS), 220-240 (VLLS…LVAA), and 244-264 (AWVI…FVLI). Positions 310-314 (HVLHH) match the Histidine box-3 motif.

It belongs to the fatty acid desaturase type 1 family.

The protein resides in the membrane. It functions in the pathway lipid metabolism; polyunsaturated fatty acid biosynthesis. Functionally, converts linoleic acid into a conjugated octadecatrienoic acid, probably calendic acid. The protein is Delta(12) fatty acid desaturase DES8.11 of Calendula officinalis (Pot marigold).